The following is a 243-amino-acid chain: MTQHDTIFSKPLPSISDFCFDQQVVEVFPDMINRSVPGYSSILQTLPQIVSRYVQPNSHLYDLGCSLGAATLAIRKGCEQTENCKIIGIDNSQPMIERAQLHLDGFKSQIPVELHCQDLAETEIKNASVVVLNFTLQFISQDKRDEVIQNIFNGMNKGGALLVAEKVRHPDESMNDLLIELHHNFKRANGYSELEISQKRAAIENVMKVDTLQAHQQRFQKAGFQHSSVWFQCFNFAAMLAVK.

S-adenosyl-L-methionine is bound by residues Y39, 64 to 66 (GCS), 90 to 91 (DN), 118 to 119 (DL), N133, and R200.

The protein belongs to the class I-like SAM-binding methyltransferase superfamily. Cx-SAM synthase family. As to quaternary structure, homodimer.

The catalysed reaction is prephenate + S-adenosyl-L-methionine = carboxy-S-adenosyl-L-methionine + 3-phenylpyruvate + H2O. Catalyzes the conversion of S-adenosyl-L-methionine (SAM) to carboxy-S-adenosyl-L-methionine (Cx-SAM). The chain is Carboxy-S-adenosyl-L-methionine synthase from Idiomarina loihiensis (strain ATCC BAA-735 / DSM 15497 / L2-TR).